Reading from the N-terminus, the 502-residue chain is Glycogen synthase (502 aa).

Lys24 is a binding site for ADP-alpha-D-glucose.

This sequence belongs to the glycosyltransferase 1 family. Bacterial/plant glycogen synthase subfamily.

It carries out the reaction [(1-&gt;4)-alpha-D-glucosyl](n) + ADP-alpha-D-glucose = [(1-&gt;4)-alpha-D-glucosyl](n+1) + ADP + H(+). It participates in glycan biosynthesis; glycogen biosynthesis. Functionally, synthesizes alpha-1,4-glucan chains using ADP-glucose. The protein is Glycogen synthase of Nitrosomonas eutropha (strain DSM 101675 / C91 / Nm57).